A 519-amino-acid chain; its full sequence is F-box only protein 31-A (519 aa).

Residues G11–E37 form a disordered region. The F-box domain maps to P54 to R100. Zn(2+) contacts are provided by C196, H204, C220, and H226. The span at R369–E390 shows a compositional bias: basic and acidic residues. Residues R369–Q424 are disordered.

The protein belongs to the FBXO31 family. In terms of assembly, part of a SCF (SKP1-cullin-F-box) protein ligase complex SCF(FBXO31).

Its subcellular location is the cytoplasm. It participates in protein modification; protein ubiquitination. In terms of biological role, substrate-recognition component of the SCF(FBXO31) protein ligase complex, which specifically mediates the ubiquitination of proteins amidated at their C-terminus in response to oxidative stress, leading to their degradation by the proteasome. Fbxo31 specifically recognizes and binds C-terminal peptides bearing an amide: C-terminal amidation in response to oxidative stress takes place following protein fragmentation. The SCF(FBXO31) also plays a role in G1 arrest following DNA damage by mediating ubiquitination of phosphorylated cyclin-D1 (ccnd1), promoting its degradation by the proteasome, resulting in G1 arrest. The SCF(FBXO31) complex is however not a major regulator of ccnd1 stability during the G1/S transition. The chain is F-box only protein 31-A (fbxo31-a) from Xenopus laevis (African clawed frog).